A 491-amino-acid chain; its full sequence is Probable Xaa-Pro aminopeptidase An01g13040 (491 aa).

The Mn(2+) site is built by aspartate 276, aspartate 287, glutamate 420, and glutamate 459.

It belongs to the peptidase M24B family. Mn(2+) serves as cofactor.

The enzyme catalyses Release of any N-terminal amino acid, including proline, that is linked to proline, even from a dipeptide or tripeptide.. Catalyzes the removal of a penultimate prolyl residue from the N-termini of peptides. The protein is Probable Xaa-Pro aminopeptidase An01g13040 of Aspergillus niger (strain ATCC MYA-4892 / CBS 513.88 / FGSC A1513).